Reading from the N-terminus, the 152-residue chain is Ribosome maturation factor RimP (152 aa).

This sequence belongs to the RimP family.

The protein localises to the cytoplasm. In terms of biological role, required for maturation of 30S ribosomal subunits. The sequence is that of Ribosome maturation factor RimP from Salmonella arizonae (strain ATCC BAA-731 / CDC346-86 / RSK2980).